A 462-amino-acid chain; its full sequence is UDP-N-acetylmuramoylalanine--D-glutamate ligase (462 aa).

120–126 lines the ATP pocket; it reads GTNGKTT.

This sequence belongs to the MurCDEF family.

The protein localises to the cytoplasm. The catalysed reaction is UDP-N-acetyl-alpha-D-muramoyl-L-alanine + D-glutamate + ATP = UDP-N-acetyl-alpha-D-muramoyl-L-alanyl-D-glutamate + ADP + phosphate + H(+). The protein operates within cell wall biogenesis; peptidoglycan biosynthesis. Cell wall formation. Catalyzes the addition of glutamate to the nucleotide precursor UDP-N-acetylmuramoyl-L-alanine (UMA). The protein is UDP-N-acetylmuramoylalanine--D-glutamate ligase of Bdellovibrio bacteriovorus (strain ATCC 15356 / DSM 50701 / NCIMB 9529 / HD100).